The chain runs to 381 residues: V-type proton ATPase subunit C 1-B (381 aa).

The residue at position 2 (Thr-2) is an N-acetylthreonine.

Belongs to the V-ATPase C subunit family. As to quaternary structure, V-ATPase is a heteromultimeric enzyme made up of two complexes: the ATP-hydrolytic V1 complex and the proton translocation V0 complex. The V1 complex consists of three catalytic AB heterodimers that form a heterohexamer, three peripheral stalks each consisting of EG heterodimers, one central rotor including subunits D and F, and the regulatory subunits C and H. The proton translocation complex V0 consists of the proton transport subunit a, a ring of proteolipid subunits c9c'', rotary subunit d, subunits e and f, and two accessory subunits.

Functionally, subunit of the V1 complex of vacuolar(H+)-ATPase (V-ATPase), a multisubunit enzyme composed of a peripheral complex (V1) that hydrolyzes ATP and a membrane integral complex (V0) that translocates protons. V-ATPase is responsible for acidifying and maintaining the pH of intracellular compartments and in some cell types, is targeted to the plasma membrane, where it is responsible for acidifying the extracellular environment. Subunit C is necessary for the assembly of the catalytic sector of the enzyme and is likely to have a specific function in its catalytic activity. The sequence is that of V-type proton ATPase subunit C 1-B (atp6v1c1b) from Danio rerio (Zebrafish).